Reading from the N-terminus, the 674-residue chain is Xaa-Pro aminopeptidase 2 (674 aa).

The signal sequence occupies residues 1-22; sequence MAQAYWQCYPWLVLLCACAWSY. Asn-65 is a glycosylation site (N-linked (GlcNAc...) asparagine). Arg-116 is a binding site for substrate. 2 N-linked (GlcNAc...) asparagine glycosylation sites follow: Asn-278 and Asn-293. His-430 serves as a coordination point for substrate. Zn(2+)-binding residues include Asp-450, Asp-461, and His-524. Substrate is bound by residues His-524, His-533, and Glu-555. The Zn(2+) site is built by Glu-555 and Glu-569. Residue Ala-650 is the site of GPI-anchor amidated alanine attachment. A propeptide spans 651 to 674 (removed in mature form); the sequence is SAPHTTSLASMWVASALAILSWSC.

This sequence belongs to the peptidase M24B family. In terms of assembly, homotrimer. Zn(2+) serves as cofactor. Post-translationally, N-glycosylated. In terms of tissue distribution, expressed strongly in lung, liver and heart, and at lower levels in kidney, testis, brain, spleen and skeletal muscle.

It is found in the cell membrane. It carries out the reaction Release of any N-terminal amino acid, including proline, that is linked to proline, even from a dipeptide or tripeptide.. Inhibited by the chelating agents 1,10-phenanthroline and EDTA. Inhibited by the thiol-containing compounds 2-mercaptoethanol and dithiothreitol. Also inhibited by apstatin, captopril and p-(ch1oromercuri)benzenesulfonic acid. Weakly inhibited by D,L-2-mercaptomethyl-3-guanidinoethylthiopropanoic acid and N-[l-(R,S)-carboxy-(2-phenylethyl)]-Ala-Ala-Phe-p-aminobenzoate. Inhibited by ramiprilat and enalaprilat, in a Mn(2+)-dependent manner. Metal ions have a complex substrate- and concentration-dependent effect on activity. Activity towards Arg-Pro-Pro and Gly-Pro-Hyp is stimulated by Mn(2+) ion concentrations of 10-100 uM and then inhibited at Mn(2+) concentrations of 1-2 mM. Mn(2+) concentrations in excess of 2 mM stimulate activity towards Gly-Pro-Hyp but inhibit activity towards Arg-Pro-Pro. Zn(2+) and Co(2+) ions also inhibit activity towards Arg-Pro-Pro at high concentrations. Activity towards bradykinin is inhibited by Mn(2+) concentrations in excess of 1 mM. In terms of biological role, membrane-bound metalloprotease which catalyzes the removal of a penultimate prolyl residue from the N-termini of peptides, such as Arg-Pro-Pro. May play a role in the metabolism of the vasodilator bradykinin. This Rattus norvegicus (Rat) protein is Xaa-Pro aminopeptidase 2.